Reading from the N-terminus, the 1434-residue chain is Probable ATP-dependent DNA helicase HFM1 (1434 aa).

The Helicase ATP-binding domain occupies 289–476 (DDLLYTDRNF…WLSDGERPAV (188 aa)). ATP is bound at residue 302–309 (APTGSGKT). Positions 410-413 (DEVH) match the DEAH box motif. The 205-residue stretch at 514–718 (KVYSVIRTYS…DVNIALDWIR (205 aa)) folds into the Helicase C-terminal domain. The SEC63 domain maps to 775–1089 (PTEAGRLMAW…VGLDIHQKFT (315 aa)). The segment at 1110–1130 (TDISHSDYSGRATATGSSKGM) is disordered. The segment at 1141–1156 (CHHHCKNKHACGHDCC) adopts a C4-type zinc-finger fold. Residues 1294–1333 (GFGDTRDSSLGGSKLPFQKSSSRFQRDNSNSFASSPGKPD) form a disordered region. Polar residues predominate over residues 1311–1327 (QKSSSRFQRDNSNSFAS).

The protein belongs to the helicase family. SKI2 subfamily. The cofactor is Zn(2+).

It catalyses the reaction Couples ATP hydrolysis with the unwinding of duplex DNA by translocating in the 3'-5' direction.. The enzyme catalyses ATP + H2O = ADP + phosphate + H(+). Functionally, required for crossover formation and complete synapsis of homologous chromosomes during meiosis. In Mus musculus (Mouse), this protein is Probable ATP-dependent DNA helicase HFM1.